The sequence spans 181 residues: MNTEGASLSEQLLDAARRNNLDLLETVFDSLDNDPEKIAKLINESKEPLGNTALHLCCKYGSWEVLDKILDQDGEIEIDPQNDVDGDTPLHVTVRYSQEEPEHGTFIARNLIEVGADPRVRNYNNQKPVDLVHGDELDELIDLLQGAELAIDSTNGSGDNNEDGEMIDDGPSDDDEEDDKK.

Met1 is subject to N-acetylmethionine. ANK repeat units follow at residues Leu49 to Ile78 and Asp85 to Val120. The tract at residues Ile151–Lys181 is disordered. The segment covering Asn160–Lys181 has biased composition (acidic residues). Phosphoserine is present on Ser172.

The sequence is that of Ankyrin repeat-containing protein YGL242C from Saccharomyces cerevisiae (strain ATCC 204508 / S288c) (Baker's yeast).